A 440-amino-acid chain; its full sequence is F-box protein pof12 (440 aa).

An F-box domain is found at lysine 8–leucine 54.

In terms of assembly, interacts with skp1.

The protein localises to the nucleus. This Schizosaccharomyces pombe (strain 972 / ATCC 24843) (Fission yeast) protein is F-box protein pof12 (pof12).